The sequence spans 293 residues: D-alanine--D-alanine ligase (293 aa).

In terms of domain architecture, ATP-grasp spans 98 to 291 (KIIWKQHNLT…FNKLVVAIIN (194 aa)). 124 to 177 (DFPLPWMVKPTLEGSSIGISKVDSQIQLNNALMLAWQYNSHALIEQWIEGDEYT) contacts ATP. Residues Asp-245, Glu-258, and Asn-260 each coordinate Mg(2+).

Belongs to the D-alanine--D-alanine ligase family. The cofactor is Mg(2+). It depends on Mn(2+) as a cofactor.

It localises to the cytoplasm. It catalyses the reaction 2 D-alanine + ATP = D-alanyl-D-alanine + ADP + phosphate + H(+). The protein operates within cell wall biogenesis; peptidoglycan biosynthesis. In terms of biological role, cell wall formation. The chain is D-alanine--D-alanine ligase from Ruthia magnifica subsp. Calyptogena magnifica.